The primary structure comprises 299 residues: Delta-9 desaturase-like 5 protein (299 aa).

A run of 2 helical transmembrane segments spans residues Ala31–Phe51 and Trp55–Ser75. The Histidine box-1 signature appears at His77 to His82. Residues His114–His118 carry the Histidine box-2 motif. Helical transmembrane passes span Ile174–Leu194 and Gly199–Trp219. The Histidine box-3 motif lies at His246 to His250.

Belongs to the fatty acid desaturase type 1 family. The cofactor is Fe cation.

It localises to the endoplasmic reticulum membrane. Its pathway is lipid metabolism; polyunsaturated fatty acid biosynthesis. This Arabidopsis thaliana (Mouse-ear cress) protein is Delta-9 desaturase-like 5 protein.